We begin with the raw amino-acid sequence, 221 residues long: PKHD-type hydroxylase P9303_20491 (221 aa).

The Fe2OG dioxygenase domain occupies 80-174; it reads HIHGVMFSRS…RLVCVGWIQS (95 aa). Fe cation contacts are provided by H98, D100, and H155. Position 165 (R165) interacts with 2-oxoglutarate.

It depends on Fe(2+) as a cofactor. L-ascorbate serves as cofactor.

The polypeptide is PKHD-type hydroxylase P9303_20491 (Prochlorococcus marinus (strain MIT 9303)).